A 262-amino-acid polypeptide reads, in one-letter code: Cytochrome c oxidase subunit 3 (262 aa).

Transmembrane regions (helical) follow at residues 16–36 (PWPY…VVYF), 39–59 (SQTW…IVWW), 83–103 (GMLL…WAFF), 128–148 (FSVP…VTWA), 160–180 (AING…LQAM), 198–218 (FFVA…FLAV), and 241–261 (WYWH…YWWG).

This sequence belongs to the cytochrome c oxidase subunit 3 family. In terms of assembly, component of the cytochrome c oxidase (complex IV, CIV), a multisubunit enzyme composed of a catalytic core of 3 subunits and several supernumerary subunits. The complex exists as a monomer or a dimer and forms supercomplexes (SCs) in the inner mitochondrial membrane with ubiquinol-cytochrome c oxidoreductase (cytochrome b-c1 complex, complex III, CIII).

The protein resides in the mitochondrion inner membrane. It catalyses the reaction 4 Fe(II)-[cytochrome c] + O2 + 8 H(+)(in) = 4 Fe(III)-[cytochrome c] + 2 H2O + 4 H(+)(out). Its function is as follows. Component of the cytochrome c oxidase, the last enzyme in the mitochondrial electron transport chain which drives oxidative phosphorylation. The respiratory chain contains 3 multisubunit complexes succinate dehydrogenase (complex II, CII), ubiquinol-cytochrome c oxidoreductase (cytochrome b-c1 complex, complex III, CIII) and cytochrome c oxidase (complex IV, CIV), that cooperate to transfer electrons derived from NADH and succinate to molecular oxygen, creating an electrochemical gradient over the inner membrane that drives transmembrane transport and the ATP synthase. Cytochrome c oxidase is the component of the respiratory chain that catalyzes the reduction of oxygen to water. Electrons originating from reduced cytochrome c in the intermembrane space (IMS) are transferred via the dinuclear copper A center (CU(A)) of subunit 2 and heme A of subunit 1 to the active site in subunit 1, a binuclear center (BNC) formed by heme A3 and copper B (CU(B)). The BNC reduces molecular oxygen to 2 water molecules using 4 electrons from cytochrome c in the IMS and 4 protons from the mitochondrial matrix. In Metridium senile (Brown sea anemone), this protein is Cytochrome c oxidase subunit 3 (COIII).